The following is a 274-amino-acid chain: uncharacterized protein (274 aa).

Over residues 1-20 (MSLEKSLDEIINERTNGFDH) the composition is skewed to basic and acidic residues. Disordered regions lie at residues 1-63 (MSLE…HDLD), 148-217 (NLKG…EDLD), and 230-274 (ASTV…MEAV). Over residues 21–44 (KHSRRRGSQNRISKKSRLTYKFKR) the composition is skewed to basic residues. Positions 45–63 (ASKEHNSSPDDGPWQHDLD) are enriched in basic and acidic residues. Residues 85-161 (FGVRVENLHY…SEIQISKKSP (77 aa)) form the RRM domain. Positions 148–160 (NLKGSEIQISKKS) are enriched in polar residues. 2 stretches are compositionally biased toward low complexity: residues 181-190 (SSRSNRGFNR) and 200-211 (RSSSKKSSNNSI). Residues 230–245 (ASTVSSHSSQDFTPSI) are compositionally biased toward polar residues. The segment covering 263–274 (LTEEMDLQMEAV) has biased composition (acidic residues).

This is an uncharacterized protein from Schizosaccharomyces pombe (strain 972 / ATCC 24843) (Fission yeast).